A 133-amino-acid chain; its full sequence is Large ribosomal subunit protein uL15 (133 aa).

Residues 1-64 (MGLENLKPAK…QPLQRRLPKI (64 aa)) are disordered.

It belongs to the universal ribosomal protein uL15 family. Part of the 50S ribosomal subunit.

Its function is as follows. Binds to the 23S rRNA. The sequence is that of Large ribosomal subunit protein uL15 from Helicobacter pylori (strain Shi470).